The chain runs to 142 residues: MENFNFKCYDIDEKEIPIPPGLPQSIIARLIEICNVKFDIREDEIYNVKYPVLIGKEEDLKEAKKYLELITEAKLTLRDIARLARRFKVKAKIYTDDEDLRYILDVLSNDIANKDYIEIVEEMPEGDKEVIEIGDKKIYVGI.

This is an uncharacterized protein from Methanocaldococcus jannaschii (strain ATCC 43067 / DSM 2661 / JAL-1 / JCM 10045 / NBRC 100440) (Methanococcus jannaschii).